The following is a 709-amino-acid chain: MGMSKSRGCFGYPLSIFFIVVNEFCERFSYYGMRALLVLYFRNFLGWDDNLSTAIYHTFVALCYLTPILGALIADSWLGKFKTIVSLSIVYTIGQAVISVSSINDLTDHDHNGSPDSLPVHVALSMVGLALIALGTGGIKPCVSAFGGDQFEEGQEKQRNRFFSIFYLAINGGSLLSTIITPILRVQQCGIHSQQACYPLAFGVPAALMAVALIVFVLGSGMYKKFQPQGNIMGKVAKCIGFAIKNRFRHRSKAYPKREHWLDWAKEKYDERLISQIKMVTKVMFLYIPLPMFWALFDQQGSRWTLQATTMNGKIGAIEIQPDQMQTVNAILIVIMVPIVDAVVYPLIAKCGFNFTSLKKMTVGMFLASMAFVVAAIVQVEIDKTLPVFPGGNQVQIKVLNIGNNNMTVHFPGNSVTLAQMSQTDTFMTFDIDKLTSINISSSGSPGVTTVAHDFEQGHRHTLLVWNPSQYRVVKDGLNQKPEKGENGIRFVNTLNEMVTIKMSGKVYENVTSHNASGYQFFPSGEKQYTINTTAVAPTCLTDFKSSNLDFGSAYTYVIRRASDGCLEVKEFEDIPPNTVNMALQIPQYFLLTCGEVVFSVTGLEFSYSQAPSNMKSVLQAGWLLTVAVGNIIVLIVAGAGHFPKQWAEYILFASLLLVVCVIFAIMARFYTYINPAEIEAQFDEDEKKKGIGKENPYSSLEPVSQTNM.

The chain crosses the membrane as a helical span at residues 1–21 (MGMSKSRGCFGYPLSIFFIVV). At 22–53 (NEFCERFSYYGMRALLVLYFRNFLGWDDNLST) the chain is on the extracellular side. N-linked (GlcNAc...) asparagine glycosylation occurs at Asn50. Residues 54–74 (AIYHTFVALCYLTPILGALIA) form a helical membrane-spanning segment. Residues 75–82 (DSWLGKFK) lie on the Cytoplasmic side of the membrane. Residues 83–103 (TIVSLSIVYTIGQAVISVSSI) form a helical membrane-spanning segment. Residues 104 to 118 (NDLTDHDHNGSPDSL) lie on the Extracellular side of the membrane. The chain crosses the membrane as a helical span at residues 119-139 (PVHVALSMVGLALIALGTGGI). Topologically, residues 140–161 (KPCVSAFGGDQFEEGQEKQRNR) are cytoplasmic. The helical transmembrane segment at 162–182 (FFSIFYLAINGGSLLSTIITP) threads the bilayer. The Extracellular segment spans residues 183–198 (ILRVQQCGIHSQQACY). The chain crosses the membrane as a helical span at residues 199–219 (PLAFGVPAALMAVALIVFVLG). Over 220 to 276 (SGMYKKFQPQGNIMGKVAKCIGFAIKNRFRHRSKAYPKREHWLDWAKEKYDERLISQ) the chain is Cytoplasmic. A helical transmembrane segment spans residues 277–297 (IKMVTKVMFLYIPLPMFWALF). Over 298-327 (DQQGSRWTLQATTMNGKIGAIEIQPDQMQT) the chain is Extracellular. A helical transmembrane segment spans residues 328–348 (VNAILIVIMVPIVDAVVYPLI). The Cytoplasmic segment spans residues 349 to 361 (AKCGFNFTSLKKM). Residues 362 to 382 (TVGMFLASMAFVVAAIVQVEI) form a helical membrane-spanning segment. Over 383 to 585 (DKTLPVFPGG…PPNTVNMALQ (203 aa)) the chain is Extracellular. Residues 383–585 (DKTLPVFPGG…PPNTVNMALQ (203 aa)) are extracellular domain (ECD). N-linked (GlcNAc...) asparagine glycosylation is found at Asn406, Asn439, Asn515, and Asn532. A helical transmembrane segment spans residues 586–606 (IPQYFLLTCGEVVFSVTGLEF). Residues 607 to 620 (SYSQAPSNMKSVLQ) lie on the Cytoplasmic side of the membrane. A helical transmembrane segment spans residues 621 to 641 (AGWLLTVAVGNIIVLIVAGAG). Over 642-646 (HFPKQ) the chain is Extracellular. Residues 647 to 667 (WAEYILFASLLLVVCVIFAIM) traverse the membrane as a helical segment. Topologically, residues 668–709 (ARFYTYINPAEIEAQFDEDEKKKGIGKENPYSSLEPVSQTNM) are cytoplasmic. Residues 690–709 (KGIGKENPYSSLEPVSQTNM) are disordered. The segment covering 697–709 (PYSSLEPVSQTNM) has biased composition (polar residues).

The protein belongs to the major facilitator superfamily. Proton-dependent oligopeptide transporter (POT/PTR) (TC 2.A.17) family. As to quaternary structure, interacts (via extracellular domain region) with trypsin.

The protein resides in the apical cell membrane. The catalysed reaction is a dipeptide(out) + H(+)(out) = a dipeptide(in) + H(+)(in). It catalyses the reaction an L-amino acid tripeptide(out) + H(+)(out) = an L-amino acid tripeptide(in) + H(+)(in). It carries out the reaction L-alanyl-L-lysine(out) + H(+)(out) = L-alanyl-L-lysine(in) + H(+)(in). The enzyme catalyses L-alanyl-L-proline(out) + H(+)(out) = L-alanyl-L-proline(in) + H(+)(in). The catalysed reaction is L-alanyl-L-valine(out) + H(+)(out) = L-alanyl-L-valine(in) + H(+)(in). It catalyses the reaction carnosine(out) + H(+)(out) = carnosine(in) + H(+)(in). It carries out the reaction glycyl-L-glutamine(out) + H(+)(out) = glycyl-L-glutamine(in) + H(+)(in). The enzyme catalyses glycyl-L-leucine(out) + H(+)(out) = glycyl-L-leucine(in) + H(+)(in). The catalysed reaction is glycyl-L-proline(out) + H(+)(out) = glycyl-L-proline(in) + H(+)(in). It catalyses the reaction glycyl-sarcosine(out) + H(+)(out) = glycyl-sarcosine(in) + H(+)(in). It carries out the reaction L-leucyl-L-leucine(out) + H(+)(out) = L-leucyl-L-leucine(in) + H(+)(in). The enzyme catalyses L-leucyl-L-proline(out) + H(+)(out) = L-leucyl-L-proline(in) + H(+)(in). The catalysed reaction is L-phenylalanyl-L-leucine(out) + H(+)(out) = L-phenylalanyl-L-leucine(in) + H(+)(in). It catalyses the reaction L-phenylalanyl-L-phenylalanine(out) + H(+)(out) = L-phenylalanyl-L-phenylalanine(in) + H(+)(in). It carries out the reaction L-lysyl-glycine(out) + H(+)(out) = L-lysyl-glycine(in) + H(+)(in). The enzyme catalyses L-tyrosylglycine(out) + H(+)(out) = L-tyrosylglycine(in) + H(+)(in). The catalysed reaction is L-alanyl-L-aspartate(out) + 2 H(+)(out) = L-alanyl-L-aspartate(in) + 2 H(+)(in). It catalyses the reaction L-aspartyl-glycine(out) + 2 H(+)(out) = L-aspartyl-glycine(in) + 2 H(+)(in). It carries out the reaction glycyl-L-aspartate(out) + 2 H(+)(out) = glycyl-L-aspartate(in) + 2 H(+)(in). The enzyme catalyses glycyl-L-glutamate(out) + 2 H(+)(out) = glycyl-L-glutamate(in) + 2 H(+)(in). The catalysed reaction is L-alanyl-L-leucyl-L-alanine(out) + H(+)(out) = L-alanyl-L-leucyl-L-alanine(in) + H(+)(in). It catalyses the reaction L-alanyl-L-prolylglycine(out) + H(+)(out) = L-alanyl-L-prolylglycine(in) + H(+)(in). It carries out the reaction glycylglycyl-L-isoleucine(out) + H(+)(out) = glycylglycyl-L-isoleucine(in) + H(+)(in). The enzyme catalyses glycylglycyl-L-proline(out) + H(+)(out) = glycylglycyl-L-proline(in) + H(+)(in). The catalysed reaction is L-methionyl-L-phenylalanyl-L-methionine(out) + H(+)(out) = L-methionyl-L-phenylalanyl-L-methionine(in) + H(+)(in). It catalyses the reaction N-acetyl-D-muramoyl-L-alanyl-D-isoglutamine(out) + 2 H(+)(out) = N-acetyl-D-muramoyl-L-alanyl-D-isoglutamine(in) + 2 H(+)(in). It carries out the reaction N(alpha)-formyl-L-methionyl-L-leucyl-L-phenylalanine(out) + 2 H(+)(out) = N(alpha)-formyl-L-methionyl-L-leucyl-L-phenylalanine(in) + 2 H(+)(in). Its function is as follows. Electrogenic proton-coupled amino-acid transporter that transports oligopeptides of 2 to 4 amino acids with a preference for dipeptides. Transports neutral and monovalently charged peptides with a proton to peptide stoichiometry of 1:1 or 2:1. Primarily responsible for the absorption of dietary di- and tripeptides from the small intestinal lumen. Mediates transepithelial transport of muramyl and N-formylated bacterial dipeptides contributing to recognition of pathogenic bacteria by the mucosal immune system. In Mus musculus (Mouse), this protein is Solute carrier family 15 member 1.